We begin with the raw amino-acid sequence, 411 residues long: Acetylornithine aminotransferase, mitochondrial (411 aa).

Lys262 carries the N6-(pyridoxal phosphate)lysine modification.

Belongs to the class-III pyridoxal-phosphate-dependent aminotransferase family. Pyridoxal 5'-phosphate serves as cofactor.

The protein resides in the mitochondrion matrix. The enzyme catalyses N(2)-acetyl-L-ornithine + 2-oxoglutarate = N-acetyl-L-glutamate 5-semialdehyde + L-glutamate. The protein operates within amino-acid biosynthesis; L-arginine biosynthesis; N(2)-acetyl-L-ornithine from L-glutamate: step 4/4. The protein is Acetylornithine aminotransferase, mitochondrial (ARG8) of Yarrowia lipolytica (strain CLIB 122 / E 150) (Yeast).